The primary structure comprises 187 residues: ATP-dependent protease subunit HslV (187 aa).

Threonine 7 is an active-site residue. Residues alanine 162, cysteine 165, and threonine 168 each contribute to the Na(+) site.

It belongs to the peptidase T1B family. HslV subfamily. As to quaternary structure, a double ring-shaped homohexamer of HslV is capped on each side by a ring-shaped HslU homohexamer. The assembly of the HslU/HslV complex is dependent on binding of ATP.

It is found in the cytoplasm. It carries out the reaction ATP-dependent cleavage of peptide bonds with broad specificity.. With respect to regulation, allosterically activated by HslU binding. Its function is as follows. Protease subunit of a proteasome-like degradation complex believed to be a general protein degrading machinery. The polypeptide is ATP-dependent protease subunit HslV (Methylococcus capsulatus (strain ATCC 33009 / NCIMB 11132 / Bath)).